A 374-amino-acid chain; its full sequence is Lipopolysaccharide glucosyltransferase WaaG (374 aa).

2 residues coordinate UDP-alpha-D-glucose: Gly15 and Asp19. Residues 103 to 132 (YAEKVAQEKGFLYRLTSRYRHYAAFERATF) form a membrane-interacting region region. Residues Arg173, Arg208, Lys209, Arg261, Glu281, Ala283, Gly284, Ile285, Val286, and Glu289 each contribute to the UDP-alpha-D-glucose site.

The protein belongs to the glycosyltransferase group 1 family. Glycosyltransferase 4 subfamily.

Its subcellular location is the cell inner membrane. Its pathway is bacterial outer membrane biogenesis; LPS core biosynthesis. Inhibited by divalent metal ions such as Mg(2+), Mn(2+), Ca(2+), Zn(2+), Co(2+), Ni(2+) and Cu(2+). Glucosyltransferase involved in the biosynthesis of the core oligosaccharide region of lipopolysaccharide (LPS). Catalyzes the addition of the first outer-core glucose from UDP-glucose to the inner-core heptose II. Cannot use other sugar donors, such as UDP-galactose, UDP-glucuronic acid, UDP-galacuronic acid, GDP-mannose, ADP-glucose and GDP-glucose. In the absence of a lipid acceptor, can slowly hydrolyze UDP-glucose. This Escherichia coli (strain K12) protein is Lipopolysaccharide glucosyltransferase WaaG.